We begin with the raw amino-acid sequence, 284 residues long: tRNA uridine(34) hydroxylase (284 aa).

Residues 132–226 form the Rhodanese domain; the sequence is AGRPVVMLDT…YFEEVGGAHY (95 aa). The active-site Cysteine persulfide intermediate is Cys-186.

It belongs to the TrhO family.

It carries out the reaction uridine(34) in tRNA + AH2 + O2 = 5-hydroxyuridine(34) in tRNA + A + H2O. Functionally, catalyzes oxygen-dependent 5-hydroxyuridine (ho5U) modification at position 34 in tRNAs. In Burkholderia cenocepacia (strain HI2424), this protein is tRNA uridine(34) hydroxylase.